We begin with the raw amino-acid sequence, 63 residues long: Large ribosomal subunit protein bL28 (63 aa).

Residues 1 to 20 form a disordered region; that stretch reads MSKRCAITGKGPMVGNNVSH.

Belongs to the bacterial ribosomal protein bL28 family.

The polypeptide is Large ribosomal subunit protein bL28 (Campylobacter concisus (strain 13826)).